Reading from the N-terminus, the 183-residue chain is UPF0397 protein EF_2154 (183 aa).

The next 5 helical transmembrane spans lie at Ile10–Pro30, Phe44–Gly64, Gly74–Ala94, Ile115–Leu135, and Gln147–Met167.

The protein belongs to the UPF0397 family.

The protein localises to the cell membrane. In Enterococcus faecalis (strain ATCC 700802 / V583), this protein is UPF0397 protein EF_2154.